The primary structure comprises 166 residues: Early E3 18.5 kDa glycoprotein (166 aa).

Positions Met-1 to Ala-19 are cleaved as a signal peptide. Topologically, residues Asn-20 to Ile-131 are lumenal. N-linked (GlcNAc...) asparagine; by host glycosylation occurs at Asn-31. Disulfide bonds link Cys-32-Cys-50 and Cys-44-Cys-106. Residues Asn-63, Asn-67, and Asn-97 are each glycosylated (N-linked (GlcNAc...) asparagine; by host). The chain crosses the membrane as a helical span at residues Ala-132–Val-152. Over Thr-153 to Pro-166 the chain is Cytoplasmic. Residues Lys-162–Pro-166 carry the Di-lysine motif motif.

Belongs to the adenoviridae E19 family. Post-translationally, both disulfide bonds are absolutely critical for the interaction with MHC antigens. In terms of processing, N-glycosylated; high-mannose.

It is found in the host endoplasmic reticulum membrane. In terms of biological role, binds and retains class I heavy chains in the endoplasmic reticulum during the early period of virus infection, thereby impairing their transport to the cell surface. Also delays the expression of class I alleles that it cannot affect by direct retention. Binds transporters associated with antigen processing (TAP) and acts as a tapasin inhibitor, preventing class I/TAP association. In consequence, infected cells are masked for immune recognition by cytotoxic T-lymphocytes. This Human adenovirus B serotype 11 (strain BC34) (HAdV-11) protein is Early E3 18.5 kDa glycoprotein.